Reading from the N-terminus, the 852-residue chain is DNA repair protein rhp54 (852 aa).

Short sequence motifs (nuclear localization signal) lie at residues 35–51 and 178–181; these read KKFK…RKEL and KRKK. A compositionally biased stretch (basic and acidic residues) spans 187–205; it reads NRKGKKEISDSEPESDHDS. Residues 187–208 form a disordered region; sequence NRKGKKEISDSEPESDHDSCVS. Positions 281–459 constitute a Helicase ATP-binding domain; sequence GRIDRCANGC…FSLLNFANPG (179 aa). 294 to 301 contacts ATP; it reads DEMGLGKT. The DEGH box motif lies at 410 to 413; the sequence is DEGH. Residues 614-767 enclose the Helicase C-terminal domain; the sequence is VLERMLYQIK…CVVDEAQDVE (154 aa).

It belongs to the SNF2/RAD54 helicase family. As to quaternary structure, homohexamer. Interacts with rhp51.

It localises to the nucleus. The catalysed reaction is ATP + H2O = ADP + phosphate + H(+). Plays an essential role in homologous recombination (HR) which is a major pathway for repairing DNA double-strand breaks (DSBs), single-stranded DNA (ssDNA) gaps, and stalled or collapsed replication forks. Acts as a molecular motor during the homology search and guides RAD51 ssDNA along a donor dsDNA thereby changing the homology search from the diffusion-based mechanism to a motor-guided mechanism. Plays also an essential role in RAD51-mediated synaptic complex formation which consists of three strands encased in a protein filament formed once homology is recognized. Once DNA strand exchange occured, dissociates RAD51 from nucleoprotein filaments formed on dsDNA. This Schizosaccharomyces pombe (strain 972 / ATCC 24843) (Fission yeast) protein is DNA repair protein rhp54 (rhp54).